The sequence spans 164 residues: Putative lung carcinoma-associated protein 10 (164 aa).

A disordered region spans residues 1 to 164 (MSSCPVHDCP…TQKPQTTVGQ (164 aa)). A compositionally biased stretch (low complexity) spans 23–40 (GSRGALRLRGGAPGSAAG). Polar residues predominate over residues 152–164 (MQKTQKPQTTVGQ).

In Homo sapiens (Human), this protein is Putative lung carcinoma-associated protein 10 (LCA10).